We begin with the raw amino-acid sequence, 330 residues long: 5-dehydro-2-deoxygluconokinase (330 aa).

The protein belongs to the carbohydrate kinase PfkB family.

The enzyme catalyses 5-dehydro-2-deoxy-D-gluconate + ATP = 6-phospho-5-dehydro-2-deoxy-D-gluconate + ADP + H(+). The protein operates within polyol metabolism; myo-inositol degradation into acetyl-CoA; acetyl-CoA from myo-inositol: step 5/7. In terms of biological role, catalyzes the phosphorylation of 5-dehydro-2-deoxy-D-gluconate (2-deoxy-5-keto-D-gluconate or DKG) to 6-phospho-5-dehydro-2-deoxy-D-gluconate (DKGP). This is 5-dehydro-2-deoxygluconokinase from Bacillus velezensis (strain DSM 23117 / BGSC 10A6 / LMG 26770 / FZB42) (Bacillus amyloliquefaciens subsp. plantarum).